A 746-amino-acid polypeptide reads, in one-letter code: NAD(P)H-quinone oxidoreductase subunit 5, chloroplastic (746 aa).

The next 16 membrane-spanning stretches (helical) occupy residues 9-29 (WIIP…LLLF), 40-60 (WAFP…DLSI), 89-109 (IDSL…LVLI), 121-140 (YLRF…GLVT), 147-167 (VYIF…FWFT), 185-205 (GDFG…SLEF), 219-239 (NEVN…GSVA), 258-278 (TPIS…FLVA), 280-300 (LLPL…IGII), 327-347 (LGYM…FHLI), 354-374 (ALLF…VGYS), 396-416 (MSFL…CFWS), 425-445 (WLYS…TAFY), 552-572 (LFSM…GISF), 606-626 (FFIN…IASF), and 726-746 (SYIF…YLFP).

It belongs to the complex I subunit 5 family. NDH is composed of at least 16 different subunits, 5 of which are encoded in the nucleus.

Its subcellular location is the plastid. It is found in the chloroplast thylakoid membrane. It carries out the reaction a plastoquinone + NADH + (n+1) H(+)(in) = a plastoquinol + NAD(+) + n H(+)(out). The catalysed reaction is a plastoquinone + NADPH + (n+1) H(+)(in) = a plastoquinol + NADP(+) + n H(+)(out). Functionally, NDH shuttles electrons from NAD(P)H:plastoquinone, via FMN and iron-sulfur (Fe-S) centers, to quinones in the photosynthetic chain and possibly in a chloroplast respiratory chain. The immediate electron acceptor for the enzyme in this species is believed to be plastoquinone. Couples the redox reaction to proton translocation, and thus conserves the redox energy in a proton gradient. The polypeptide is NAD(P)H-quinone oxidoreductase subunit 5, chloroplastic (ndhF) (Vicia faba (Broad bean)).